We begin with the raw amino-acid sequence, 375 residues long: All-trans-retinol dehydrogenase [NAD(+)] ADH1B (375 aa).

Ser-2 bears the N-acetylserine mark. Ser-23 carries the phosphoserine modification. A Phosphotyrosine modification is found at Tyr-35. Zn(2+) contacts are provided by Cys-47, His-68, Cys-98, Cys-101, Cys-104, Cys-112, and Cys-175. Residues 200–205 (GLGGVG), Asp-224, Lys-229, 293–295 (VGV), and Arg-370 contribute to the NAD(+) site.

This sequence belongs to the zinc-containing alcohol dehydrogenase family. Homodimer or heterodimer of closely related subunits. Requires Zn(2+) as cofactor. Expressed in liver.

It is found in the cytoplasm. The catalysed reaction is all-trans-retinol + NAD(+) = all-trans-retinal + NADH + H(+). The enzyme catalyses all-trans-4-hydroxyretinol + NAD(+) = all-trans-4-hydroxyretinal + NADH + H(+). It catalyses the reaction all-trans-4-oxoretinol + NAD(+) = all-trans-4-oxoretinal + NADH + H(+). Functionally, catalyzes the NAD-dependent oxidation of all-trans-retinol and its derivatives such as all-trans-4-hydroxyretinol and may participate in retinoid metabolism. In vitro can also catalyze the NADH-dependent reduction of all-trans-retinal and its derivatives such as all-trans-4-oxoretinal. Catalyzes in the oxidative direction with higher efficiency. Has the same affinity for all-trans-4-hydroxyretinol and all-trans-4-oxoretinal. The sequence is that of All-trans-retinol dehydrogenase [NAD(+)] ADH1B from Papio hamadryas (Hamadryas baboon).